Reading from the N-terminus, the 463-residue chain is Paraneoplastic antigen Ma3 (463 aa).

Residues 363–410 (VGAVPLPASGNSFDARPSQGYRRRRGRGQHRRGGVARAGSRGSRKRKR) are disordered. Positions 383–396 (YRRRRGRGQHRRGG) are enriched in basic residues. The CCHC-type zinc-finger motif lies at 412-429 (TFCYSCGEDGHIRVQCIN). The interval 440–463 (KQAAVESGNGNWAWDKSHPKSKAK) is disordered.

Belongs to the PNMA family. Expressed at high levels in the brain and testis. Expressed at lower levels in the heart, trachea and kidney.

The protein localises to the nucleus. It is found in the nucleolus. This chain is Paraneoplastic antigen Ma3 (PNMA3), found in Homo sapiens (Human).